A 580-amino-acid chain; its full sequence is F-box only protein 24 (580 aa).

Positions 36–82 (PISIQLFPPELVEHIISFLPVRDLVALGQTCRYFHEVCDAEGVWRRI) constitute an F-box domain. Residues 376–425 (GRIFMQGNNRYGQLGTGDKMDRGEPTQVRYLQRPITLWCGLNHSLVLSQS) form an RCC1 repeat.

As to quaternary structure, directly interacts with SKP1 and CUL1.

Functionally, substrate-recognition component of the SCF (SKP1-CUL1-F-box protein)-type E3 ubiquitin ligase complex. In Macaca fascicularis (Crab-eating macaque), this protein is F-box only protein 24 (FBXO24).